The sequence spans 306 residues: Porphobilinogen deaminase (306 aa).

Cys240 carries the post-translational modification S-(dipyrrolylmethanemethyl)cysteine.

The protein belongs to the HMBS family. As to quaternary structure, monomer. The cofactor is dipyrromethane.

It catalyses the reaction 4 porphobilinogen + H2O = hydroxymethylbilane + 4 NH4(+). It functions in the pathway porphyrin-containing compound metabolism; protoporphyrin-IX biosynthesis; coproporphyrinogen-III from 5-aminolevulinate: step 2/4. Functionally, tetrapolymerization of the monopyrrole PBG into the hydroxymethylbilane pre-uroporphyrinogen in several discrete steps. The polypeptide is Porphobilinogen deaminase (Thiobacillus denitrificans (strain ATCC 25259 / T1)).